Here is a 370-residue protein sequence, read N- to C-terminus: Cathepsin B-like cysteine proteinase 3 (370 aa).

The first 16 residues, 1 to 16 (MLKVYFLALFLAGCSA), serve as a signal peptide directing secretion. Positions 17–91 (FVLDEIRGIN…FVRGEIVPEP (75 aa)) are excised as a propeptide. 6 disulfides stabilise this stretch: Cys105–Cys134, Cys117–Cys162, Cys153–Cys210, Cys154–Cys158, Cys190–Cys214, and Cys198–Cys202. Cys120 is a catalytic residue. A glycan (N-linked (GlcNAc...) asparagine) is linked at Asn138. Residues His284 and Asn304 contribute to the active site.

The protein belongs to the peptidase C1 family.

The chain is Cathepsin B-like cysteine proteinase 3 (cpr-3) from Caenorhabditis elegans.